Reading from the N-terminus, the 71-residue chain is Small ribosomal subunit protein bS21 (71 aa).

The segment covering 48 to 59 has biased composition (basic residues); the sequence is KAAAAVKRHAKK. A disordered region spans residues 48-71; sequence KAAAAVKRHAKKVQRENRKFQRLY. Positions 60 to 71 are enriched in basic and acidic residues; that stretch reads VQRENRKFQRLY.

The protein belongs to the bacterial ribosomal protein bS21 family.

This Teredinibacter turnerae (strain ATCC 39867 / T7901) protein is Small ribosomal subunit protein bS21.